Reading from the N-terminus, the 739-residue chain is Phosphoribosylformylglycinamidine synthase subunit PurL (739 aa).

His53 is an active-site residue. ATP-binding residues include Tyr56 and Lys95. Position 97 (Glu97) interacts with Mg(2+). Substrate is bound by residues 98–101 (SHNH) and Arg120. His99 acts as the Proton acceptor in catalysis. Asp121 is a Mg(2+) binding site. Residue Gln244 participates in substrate binding. Asp274 is a binding site for Mg(2+). Residue 318–320 (ESQ) coordinates substrate. Positions 501 and 538 each coordinate ATP. Asn539 serves as a coordination point for Mg(2+). Substrate is bound at residue Ser541.

It belongs to the FGAMS family. Monomer. Part of the FGAM synthase complex composed of 1 PurL, 1 PurQ and 2 PurS subunits.

The protein resides in the cytoplasm. The catalysed reaction is N(2)-formyl-N(1)-(5-phospho-beta-D-ribosyl)glycinamide + L-glutamine + ATP + H2O = 2-formamido-N(1)-(5-O-phospho-beta-D-ribosyl)acetamidine + L-glutamate + ADP + phosphate + H(+). Its pathway is purine metabolism; IMP biosynthesis via de novo pathway; 5-amino-1-(5-phospho-D-ribosyl)imidazole from N(2)-formyl-N(1)-(5-phospho-D-ribosyl)glycinamide: step 1/2. Its function is as follows. Part of the phosphoribosylformylglycinamidine synthase complex involved in the purines biosynthetic pathway. Catalyzes the ATP-dependent conversion of formylglycinamide ribonucleotide (FGAR) and glutamine to yield formylglycinamidine ribonucleotide (FGAM) and glutamate. The FGAM synthase complex is composed of three subunits. PurQ produces an ammonia molecule by converting glutamine to glutamate. PurL transfers the ammonia molecule to FGAR to form FGAM in an ATP-dependent manner. PurS interacts with PurQ and PurL and is thought to assist in the transfer of the ammonia molecule from PurQ to PurL. This chain is Phosphoribosylformylglycinamidine synthase subunit PurL, found in Listeria monocytogenes serotype 4a (strain HCC23).